The following is a 102-amino-acid chain: A-type ATP synthase subunit F (102 aa).

This sequence belongs to the V-ATPase F subunit family. As to quaternary structure, has multiple subunits with at least A(3), B(3), C, D, E, F, H, I and proteolipid K(x).

It localises to the cell membrane. Its function is as follows. Component of the A-type ATP synthase that produces ATP from ADP in the presence of a proton gradient across the membrane. This is A-type ATP synthase subunit F from Thermococcus onnurineus (strain NA1).